We begin with the raw amino-acid sequence, 426 residues long: Enolase (426 aa).

Residue glutamine 163 coordinates (2R)-2-phosphoglycerate. The active-site Proton donor is glutamate 205. Positions 242, 285, and 312 each coordinate Mg(2+). (2R)-2-phosphoglycerate-binding residues include lysine 337, arginine 366, serine 367, and lysine 388. The Proton acceptor role is filled by lysine 337.

Belongs to the enolase family. The cofactor is Mg(2+).

The protein resides in the cytoplasm. Its subcellular location is the secreted. It localises to the cell surface. The enzyme catalyses (2R)-2-phosphoglycerate = phosphoenolpyruvate + H2O. Its pathway is carbohydrate degradation; glycolysis; pyruvate from D-glyceraldehyde 3-phosphate: step 4/5. In terms of biological role, catalyzes the reversible conversion of 2-phosphoglycerate (2-PG) into phosphoenolpyruvate (PEP). It is essential for the degradation of carbohydrates via glycolysis. This chain is Enolase, found in Rhodospirillum centenum (strain ATCC 51521 / SW).